The chain runs to 209 residues: Imidazole glycerol phosphate synthase subunit HisH (209 aa).

One can recognise a Glutamine amidotransferase type-1 domain in the interval 3–209 (KIAIIDYGMG…SILKNFGEMK (207 aa)). Catalysis depends on Cys-81, which acts as the Nucleophile. Active-site residues include His-190 and Glu-192.

Heterodimer of HisH and HisF.

It localises to the cytoplasm. It carries out the reaction 5-[(5-phospho-1-deoxy-D-ribulos-1-ylimino)methylamino]-1-(5-phospho-beta-D-ribosyl)imidazole-4-carboxamide + L-glutamine = D-erythro-1-(imidazol-4-yl)glycerol 3-phosphate + 5-amino-1-(5-phospho-beta-D-ribosyl)imidazole-4-carboxamide + L-glutamate + H(+). The catalysed reaction is L-glutamine + H2O = L-glutamate + NH4(+). It participates in amino-acid biosynthesis; L-histidine biosynthesis; L-histidine from 5-phospho-alpha-D-ribose 1-diphosphate: step 5/9. In terms of biological role, IGPS catalyzes the conversion of PRFAR and glutamine to IGP, AICAR and glutamate. The HisH subunit catalyzes the hydrolysis of glutamine to glutamate and ammonia as part of the synthesis of IGP and AICAR. The resulting ammonia molecule is channeled to the active site of HisF. The polypeptide is Imidazole glycerol phosphate synthase subunit HisH (Geobacter sulfurreducens (strain ATCC 51573 / DSM 12127 / PCA)).